The primary structure comprises 89 residues: Small ribosomal subunit protein uS15 (89 aa).

This sequence belongs to the universal ribosomal protein uS15 family. As to quaternary structure, part of the 30S ribosomal subunit. Forms a bridge to the 50S subunit in the 70S ribosome, contacting the 23S rRNA.

Functionally, one of the primary rRNA binding proteins, it binds directly to 16S rRNA where it helps nucleate assembly of the platform of the 30S subunit by binding and bridging several RNA helices of the 16S rRNA. In terms of biological role, forms an intersubunit bridge (bridge B4) with the 23S rRNA of the 50S subunit in the ribosome. In Coxiella burnetii (strain CbuK_Q154) (Coxiella burnetii (strain Q154)), this protein is Small ribosomal subunit protein uS15.